The primary structure comprises 148 residues: Probable glycine cleavage system H protein 2 (148 aa).

The Lipoyl-binding domain occupies Thr-32–Lys-114. An N6-lipoyllysine modification is found at Lys-73.

This sequence belongs to the GcvH family. The glycine cleavage system is composed of four proteins: P, T, L and H. Requires (R)-lipoate as cofactor.

The glycine cleavage system catalyzes the degradation of glycine. The H protein shuttles the methylamine group of glycine from the P protein to the T protein. The polypeptide is Probable glycine cleavage system H protein 2 (Saccharolobus solfataricus (strain ATCC 35092 / DSM 1617 / JCM 11322 / P2) (Sulfolobus solfataricus)).